Here is a 513-residue protein sequence, read N- to C-terminus: GMP synthase [glutamine-hydrolyzing] (513 aa).

A Glutamine amidotransferase type-1 domain is found at 9–198 (LILVLDFGSQ…VRRVCNCTGE (190 aa)). Cys-86 functions as the Nucleophile in the catalytic mechanism. Active-site residues include His-172 and Glu-174. The GMPS ATP-PPase domain maps to 199-388 (WTMENFIEIE…LGIPEHLVWR (190 aa)). 226–232 (SGGVDSS) is a binding site for ATP.

In terms of assembly, homodimer.

It carries out the reaction XMP + L-glutamine + ATP + H2O = GMP + L-glutamate + AMP + diphosphate + 2 H(+). It participates in purine metabolism; GMP biosynthesis; GMP from XMP (L-Gln route): step 1/1. Functionally, catalyzes the synthesis of GMP from XMP. The chain is GMP synthase [glutamine-hydrolyzing] from Staphylococcus epidermidis (strain ATCC 35984 / DSM 28319 / BCRC 17069 / CCUG 31568 / BM 3577 / RP62A).